The sequence spans 358 residues: Mannonate dehydratase (358 aa).

Belongs to the mannonate dehydratase family. It depends on Fe(2+) as a cofactor. Mn(2+) serves as cofactor.

It carries out the reaction D-mannonate = 2-dehydro-3-deoxy-D-gluconate + H2O. It functions in the pathway carbohydrate metabolism; pentose and glucuronate interconversion. Functionally, catalyzes the dehydration of D-mannonate. The sequence is that of Mannonate dehydratase from Lactococcus lactis subsp. cremoris (strain MG1363).